The sequence spans 393 residues: Transcription factor bHLH112 (393 aa).

Disordered regions lie at residues 248-277 (TRAQ…SPLP) and 332-356 (KQGA…NENH). The span at 254–265 (SLKRAKDNESAA) shows a compositional bias: basic and acidic residues. In terms of domain architecture, bHLH spans 270 to 319 (VTTPSPLPTFKVRKENLRDQITSLQQLVSPFGKTDTASVLQEAIEYIKFL). Over residues 332–347 (KQGASNQQQQQISGKS) the composition is skewed to low complexity.

In terms of assembly, homodimer.

It localises to the nucleus. This Arabidopsis thaliana (Mouse-ear cress) protein is Transcription factor bHLH112 (BHLH112).